We begin with the raw amino-acid sequence, 199 residues long: MTTLTAQQIACVYAWLAQLFSRELDDEQLTQIASAQMAEWFSLLKSEPPLVAAVNELENCIATLTVRDDARLELAADFCGLFLMTDKQAALPYASAYKQDEQEIKRLLVEAGMETSGNFNEPADHLAIYLELLSHLHFSLGEGTVPARRIDSLRQKTLTALWQWLPEFVARCRQYDSFGFYAALSQLLLVLVECDHQNR.

It belongs to the TorD/DmsD family. TorD subfamily.

The protein localises to the cytoplasm. In terms of biological role, involved in the biogenesis of TorA. Acts on TorA before the insertion of the molybdenum cofactor and, as a result, probably favors a conformation of the apoenzyme that is competent for acquiring the cofactor. The polypeptide is Chaperone protein TorD (Escherichia coli (strain ATCC 8739 / DSM 1576 / NBRC 3972 / NCIMB 8545 / WDCM 00012 / Crooks)).